The primary structure comprises 242 residues: Protein HTATIP2 (242 aa).

A2 is subject to N-acetylalanine. The segment at 2–25 (AETEALSKLREDFRMQNKSVFILG) is required for interaction with elongation factor EEF1A1. Residues S27, G28, E29, T30, R52, R53, L92, G93, Y143, K147, and R178 each contribute to the NADPH site. Residue Y143 is the Proton acceptor of the active site. K147 is an active-site residue.

As to quaternary structure, monomer. Forms homodimers during oxidative stress. Interacts (via N-terminus) with elongation factor EEF1A1 (via middle-region); the interaction is direct and competes with EEF1A1 binding to guanyl-nucleotide exchange factor EEF1B2, thereby inhibiting GDP for GTP exchange and reactivation of EEF1A1. Interacts with nuclear transport receptors XPO4, IPO5/RANBP5, IPO7, IPO9 and KPNB1 as well as GCN1L1/GCN1 and LRPPRC probably through their HEAT repeats. Binds NCOA5/CIA.

It is found in the cytoplasm. Functionally, represses translation by preventing reactivation of elongation factor eEF1A. May also inhibit nuclear import by competing with nuclear import substrates for binding to a subset of nuclear transport receptors. Has additionally been proposed to act as a redox sensor involved in cellular oxidative stress surveillance. The polypeptide is Protein HTATIP2 (HTATIP2) (Pan paniscus (Pygmy chimpanzee)).